The chain runs to 1320 residues: MEFPQQPQQQRPAGDGKITYPLGVKEITDKISNDEVVKRLKLVVKTYMDMDQDSEEEKQQYLALALHLASEFFLRNPNKDVRLLVACCLADIFRIYAPEAPYTSHDKLKEIFLFITRQLKGLEDTKSPQFNRYFYLLENLAWVKSYNICFELEDCNEIFIQLFKTLFSVINNSHNQKVQMHMLDLMSSIIMEGDGVTQELLDTILINLIPAHKNLNKQAYDLARTLLKRTVQTIETCIASFFNQVLVMGKSSVSDLSEHVFDLIQELFAIDPLLLVSVMPQLEFKLKSNDGEERLAVVKLLAKLFGAKDSELATQNRPLWQCFLGRFNDIHVPVRLECVKFASHCLMNHPDLAKDLTEFLKVRSHDPEEAIRHDVIVTIINAGKKDLNLVNDQLLGFVRERMLDKRWRVRKEAMMGLAQLFKKYCLHHEAGKESALKISWIKDKLLHIYYQNSIDDKLLVEKIFAQYMVPHSLETEEKMKCLYYLYACLDTNAVKALNEMWKCQNMLRGLVRELLDLHKLPTSEANTSAMFGKLMTIAKNLPDPGKAQDFMKKFNQVLGEDEKLRLQLEQLISPTCSCKQAEQCVREITRKLTFPKQPTNPFLEMVKFLLERIAPVHIDSEAISALVKLLNKSIEGTADDEDEGVTPDTAIRAGLELLKVLSFTHPTAFHSAETYESLLQCLKMEDDKVAEAAIQIFRNTGQKIETELPQIRSTLIPILHQKAKRGTPHQAKQAVHCIHAIFHNKEVQLAQIFEPLSRSLNADVPEQLITPLVSLGHISMLAPDQFASPMKSIVANFIVKDLLMNDRSVGNKNGRLWTADDEVSPEVLAKVQAIKLLVRWLLGMKNNQSKSANSTLRLPSAMLVSEGDLTEQKKISKSDMSRLRLAAGSAILKLAQEPCYHDIITPEQFQLCGLVINDECYQVRQIYAQKLHVALVKLLLPLEYMAVFALCAKDPVKERRAHARQCLLKNISVRREYIKQNPMAHEKLLSLLPEYVVPYMIHLLAHDPDLTKPQDLEQLRDVKECLWFMLEVLMTKNENNSHSFLRKMVENIKQTKDAQCPDDPKANEKLYIVCDVALFVIANKSTSCHLDSPKDPVLPSKFYTPPDKEFVNDKEYLSAEAKIVLQTGKIQQPPKQTGVLGAVNKPLTVTARRPYIKTFTSETGSNASTNSQPSSPATNKSRDVSSEVGARENEENPVITKAVSVKKEEAAQPSGRKRAAPASDGTENSVSSNPSAGSQPPLNKPRRGRPPKNSAGAATQEKEAGATTGAGAGRGRKRAAPSQDPSSTASTDALSDKTPKQQKEAEPKRAAPQRQIDLQR.

HEAT repeat units lie at residues 156-195, 272-310, 388-426, 709-747, and 990-1028; these read NEIF…EGDG, PLLL…AKDS, NLVN…KYCL, PQIR…NKEV, and SLLP…CLWF. Residues 1158–1179 are compositionally biased toward polar residues; the sequence is TFTSETGSNASTNSQPSSPATN. Residues 1158–1320 form a disordered region; it reads TFTSETGSNA…APQRQIDLQR (163 aa). The span at 1180–1194 shows a compositional bias: basic and acidic residues; it reads KSRDVSSEVGARENE. Residues 1225–1241 are compositionally biased toward polar residues; that stretch reads GTENSVSSNPSAGSQPP. Low complexity predominate over residues 1255 to 1267; it reads AGAATQEKEAGAT. A compositionally biased stretch (polar residues) spans 1283–1293; the sequence is QDPSSTASTDA. The span at 1294–1309 shows a compositional bias: basic and acidic residues; that stretch reads LSDKTPKQQKEAEPKR.

Belongs to the PDS5 family. Interacts with the cohesin complex. Binds chromatin in a cohesin-dependent manner.

Its subcellular location is the nucleus. May regulate sister chromatid cohesion during mitosis and couple it to DNA replication. In Danio rerio (Zebrafish), this protein is Sister chromatid cohesion protein PDS5 homolog A.